The sequence spans 167 residues: Peptidyl-prolyl cis-trans isomerase-like 3 (167 aa).

The PPIase cyclophilin-type domain maps to 1–153 (MSVTLHTNLG…QEIKLLNVTV (153 aa)).

Belongs to the cyclophilin-type PPIase family. PPIL3 subfamily.

The catalysed reaction is [protein]-peptidylproline (omega=180) = [protein]-peptidylproline (omega=0). Its function is as follows. PPIases accelerate the folding of proteins. It catalyzes the cis-trans isomerization of proline imidic peptide bonds in oligopeptides. The sequence is that of Peptidyl-prolyl cis-trans isomerase-like 3 (CYP10) from Cryptococcus neoformans var. neoformans serotype D (strain B-3501A) (Filobasidiella neoformans).